A 66-amino-acid chain; its full sequence is Phylloseptin-S4 (66 aa).

The first 22 residues, 1–22 (MAFLKKSLFLVLFLGLVSLSIC), serve as a signal peptide directing secretion. The propeptide occupies 23–46 (EEEKRETEEEEHDQEEDDKSEEKR). The segment at 25–44 (EKRETEEEEHDQEEDDKSEE) is disordered. Acidic residues predominate over residues 30–41 (EEEEHDQEEDDK). L65 bears the Leucine amide mark.

As to expression, expressed by the skin glands.

The protein localises to the secreted. Its subcellular location is the target cell membrane. Functionally, antimicrobial peptide with high activity against Gram-positive bacteria, moderate activity against Gram-negative bacteria, and moderate activity against fungi. Acts by causing bacterial membrane disruption inducing leakage of the intracellular content followed by cell death. It adopts an alpha-helical amphipathic structure in membrane environments. Also shows highly potent antiparasitic activity against Leishmania species. Shows moderate hemolytic activity on human erythrocytes (LC(50)=33 uM). Is also active on human monocytes (IC(50)=23 uM). This is Phylloseptin-S4 from Phyllomedusa sauvagei (Sauvage's leaf frog).